The following is a 400-amino-acid chain: Elongation factor Tu 2 (400 aa).

The tr-type G domain maps to 10 to 209 (KPHVNIGTIG…AVDEYIPTPQ (200 aa)). Residues 19-26 (GHVDHGKT) form a G1 region. 19–26 (GHVDHGKT) serves as a coordination point for GTP. Thr-26 serves as a coordination point for Mg(2+). The segment at 60-64 (GITIN) is G2. Residues 81-84 (DCPG) are G3. GTP is bound by residues 81-85 (DCPGH) and 136-139 (NKAD). Residues 136–139 (NKAD) form a G4 region. The segment at 174–176 (SAL) is G5.

Belongs to the TRAFAC class translation factor GTPase superfamily. Classic translation factor GTPase family. EF-Tu/EF-1A subfamily. In terms of assembly, monomer.

It localises to the cytoplasm. The enzyme catalyses GTP + H2O = GDP + phosphate + H(+). GTP hydrolase that promotes the GTP-dependent binding of aminoacyl-tRNA to the A-site of ribosomes during protein biosynthesis. The sequence is that of Elongation factor Tu 2 from Pelotomaculum thermopropionicum (strain DSM 13744 / JCM 10971 / SI).